The sequence spans 509 residues: DNA nucleotidylexotransferase (509 aa).

The segment at Met-1–Ser-25 is disordered. The Nuclear localization signal signature appears at Pro-11–Arg-17. The region spanning Pro-27–Gln-124 is the BRCT domain. The interval Ser-151–Ala-509 is mediates interaction with DNTTIP2. The interval Val-258–Thr-262 is involved in DNA binding. A 2'-deoxyribonucleoside 5'-triphosphate contacts are provided by residues Gly-333–Lys-338 and His-342–Asp-345. Positions 343, 345, and 433 each coordinate Mg(2+). Gly-448–Trp-449 is an a 2'-deoxyribonucleoside 5'-triphosphate binding site.

It belongs to the DNA polymerase type-X family. In terms of assembly, interacts with PRP19 and DNTTIP1. Forms a ternary complex with DNTTIP2 and core histone. Released from this complex by PCNA. Interacts with TRERF1. The cofactor is Mg(2+).

It is found in the nucleus. The enzyme catalyses DNA(n) + a 2'-deoxyribonucleoside 5'-triphosphate = DNA(n+1) + diphosphate. In terms of biological role, template-independent DNA polymerase which catalyzes the random addition of deoxynucleoside 5'-triphosphate to the 3'-end of a DNA initiator. One of the in vivo functions of this enzyme is the addition of nucleotides at the junction (N region) of rearranged Ig heavy chain and T-cell receptor gene segments during the maturation of B- and T-cells. The polypeptide is DNA nucleotidylexotransferase (DNTT) (Bos taurus (Bovine)).